We begin with the raw amino-acid sequence, 95 residues long: Aspartyl/glutamyl-tRNA(Asn/Gln) amidotransferase subunit C (95 aa).

This sequence belongs to the GatC family. As to quaternary structure, heterotrimer of A, B and C subunits.

It catalyses the reaction L-glutamyl-tRNA(Gln) + L-glutamine + ATP + H2O = L-glutaminyl-tRNA(Gln) + L-glutamate + ADP + phosphate + H(+). The enzyme catalyses L-aspartyl-tRNA(Asn) + L-glutamine + ATP + H2O = L-asparaginyl-tRNA(Asn) + L-glutamate + ADP + phosphate + 2 H(+). Allows the formation of correctly charged Asn-tRNA(Asn) or Gln-tRNA(Gln) through the transamidation of misacylated Asp-tRNA(Asn) or Glu-tRNA(Gln) in organisms which lack either or both of asparaginyl-tRNA or glutaminyl-tRNA synthetases. The reaction takes place in the presence of glutamine and ATP through an activated phospho-Asp-tRNA(Asn) or phospho-Glu-tRNA(Gln). This chain is Aspartyl/glutamyl-tRNA(Asn/Gln) amidotransferase subunit C, found in Methylorubrum populi (strain ATCC BAA-705 / NCIMB 13946 / BJ001) (Methylobacterium populi).